Consider the following 246-residue polypeptide: UPF0309 protein ABC0887 (246 aa).

One can recognise an SIS domain in the interval 33 to 212 (MVHAIKEGKS…VLKMIEQLEE (180 aa)).

Belongs to the UPF0309 family.

This chain is UPF0309 protein ABC0887, found in Shouchella clausii (strain KSM-K16) (Alkalihalobacillus clausii).